The sequence spans 162 residues: MARVEL domain-containing protein 1 (162 aa).

At 1–17 the chain is on the cytoplasmic side; sequence MPTQPQEKRSFLQFLKS. Residues 14-155 form the MARVEL domain; that stretch reads FLKSFVGIVR…SGIYCSCRKC (142 aa). The chain crosses the membrane as a helical span at residues 18–38; that stretch reads FVGIVRVLQILLGAGLWVTIA. Topologically, residues 39-47 are extracellular; that stretch reads ANKYEGSIH. Residues 48-68 traverse the membrane as a helical segment; that stretch reads FVLFVAVLFWLLTLAIFILTL. Topologically, residues 69-86 are cytoplasmic; that stretch reads LDKQDLVPIVGGERWLLS. Residues 87–107 traverse the membrane as a helical segment; the sequence is NLIHDVVATLLYLSTIGIMIY. Topologically, residues 108–127 are extracellular; the sequence is KTQKNSYCNLDVYKHHCLYK. The helical transmembrane segment at 128 to 148 threads the bilayer; that stretch reads VYLTASVFACLTAAVYLLSGI. The Cytoplasmic portion of the chain corresponds to 149–162; that stretch reads YCSCRKCRGERTVV.

Its subcellular location is the membrane. It is found in the nucleus. This Danio rerio (Zebrafish) protein is MARVEL domain-containing protein 1 (marveld1).